Consider the following 151-residue polypeptide: MKTQRQQLILKLIASTPIATQDQLARELRRRGLRVTQATVSRDIKELGLIKVPAGENLYRYAAPPGQRLINPYGRLQRLFADSVTKIDDSENLILIRTLPGTAHAVASCLDSLDWPEVIGTVAGDDTILVIVKPKEAVATVLQRFRELGEG.

It belongs to the ArgR family.

It localises to the cytoplasm. The protein operates within amino-acid biosynthesis; L-arginine biosynthesis [regulation]. Regulates arginine biosynthesis genes. The sequence is that of Arginine repressor from Moorella thermoacetica (strain ATCC 39073 / JCM 9320).